A 1265-amino-acid polypeptide reads, in one-letter code: 1-phosphatidylinositol 4,5-bisphosphate phosphodiesterase gamma-2 (1265 aa).

The 112-residue stretch at Arg-20–Gln-131 folds into the PH domain. The PI-PLC X-box domain occupies Gln-312–Lys-456. Residues His-327 and His-372 contribute to the active site. 2 consecutive SH2 domains span residues Trp-532 to Val-635 and Trp-646 to Val-735. Tyr-753 and Tyr-759 each carry phosphotyrosine; by BTK. Residues Met-769–Thr-829 enclose the SH3 domain. The region spanning Leu-930–Arg-1044 is the PI-PLC Y-box domain. The C2 domain maps to Leu-1038–Asn-1169. At Tyr-1197 the chain carries Phosphotyrosine; by BTK. Phosphotyrosine occurs at positions 1217 and 1245.

In terms of assembly, part of a complex composed of EEIG1, TNFRSF11A/RANK, PLCG2, GAB2, TEC and BTK; complex formation increases in the presence of TNFSF11/RANKL. Interacts (via SH2 domain) with CSF1R (tyrosine phosphorylated). Interacts constitutively with THEMIS2. It depends on Ca(2+) as a cofactor. Phosphorylated on tyrosine residues by CSF1R. Phosphorylated on tyrosine residues by BTK and SYK; upon ligand-induced activation of a variety of growth factor receptors and immune system receptors. Phosphorylation leads to increased phospholipase activity.

It localises to the membrane raft. It carries out the reaction a 1,2-diacyl-sn-glycero-3-phospho-(1D-myo-inositol-4,5-bisphosphate) + H2O = 1D-myo-inositol 1,4,5-trisphosphate + a 1,2-diacyl-sn-glycerol + H(+). Its function is as follows. The production of the second messenger molecules diacylglycerol (DAG) and inositol 1,4,5-trisphosphate (IP3) is mediated by activated phosphatidylinositol-specific phospholipase C enzymes. It is a crucial enzyme in transmembrane signaling. This is 1-phosphatidylinositol 4,5-bisphosphate phosphodiesterase gamma-2 from Homo sapiens (Human).